We begin with the raw amino-acid sequence, 440 residues long: UDP-glucose 6-dehydrogenase YwqF (440 aa).

Residues 2–19, Val-11, Asp-30, Lys-35, Thr-121, and Glu-155 contribute to the NAD(+) site; that span reads NITV…GVSL. Substrate-binding positions include 151-155, Lys-204, Asn-208, 249-253, and Gly-257; these read EFLRE and FLKAG. Catalysis depends on Cys-260, which acts as the Nucleophile. Position 263 (Lys-263) interacts with NAD(+). Lys-320 provides a ligand contact to substrate. NAD(+) is bound at residue Arg-327.

It belongs to the UDP-glucose/GDP-mannose dehydrogenase family. In terms of processing, phosphorylated on tyrosine residue(s). Phosphorylated by YwqD and dephosphorylated by YwqE in vitro.

Its subcellular location is the cytoplasm. The catalysed reaction is UDP-alpha-D-glucose + 2 NAD(+) + H2O = UDP-alpha-D-glucuronate + 2 NADH + 3 H(+). The protein operates within nucleotide-sugar biosynthesis; UDP-alpha-D-glucuronate biosynthesis; UDP-alpha-D-glucuronate from UDP-alpha-D-glucose: step 1/1. Its activity is regulated as follows. Competitively inhibited by UDP-glucose. Activated by phosphorylation, which may increase affinity for NAD(+); inhibited by dephosphorylation. Functionally, catalyzes the conversion of UDP-glucose into UDP-glucuronate, one of the precursors of teichuronic acid. This chain is UDP-glucose 6-dehydrogenase YwqF (ywqF), found in Bacillus subtilis (strain 168).